The sequence spans 183 residues: Large ribosomal subunit protein uL6 (183 aa).

The protein belongs to the universal ribosomal protein uL6 family. As to quaternary structure, part of the 50S ribosomal subunit.

Functionally, this protein binds to the 23S rRNA, and is important in its secondary structure. It is located near the subunit interface in the base of the L7/L12 stalk, and near the tRNA binding site of the peptidyltransferase center. The sequence is that of Large ribosomal subunit protein uL6 from Malacoplasma penetrans (strain HF-2) (Mycoplasma penetrans).